We begin with the raw amino-acid sequence, 173 residues long: Eggshell protein (173 aa).

An N-terminal signal peptide occupies residues 1–18 (MKQSLTLVFLVAIGYATA). A compositionally biased stretch (gly residues) spans 145 to 162 (GSGKGKGGGKGGKGGKGG). The segment at 145–173 (GSGKGKGGGKGGKGGKGGTYKPSHYGGGY) is disordered.

The sequence is that of Eggshell protein from Schistosoma mansoni (Blood fluke).